Consider the following 80-residue polypeptide: Toxin Acra I-2 (80 aa).

Residues 1–22 (MMKLALFSIIVILFSLIGSIHG) form the signal peptide. Positions 25-80 (VPGNYPLDSSGNKYPCTVLGDNQSCIDVCKKHGVKYGYCYSFKCWCEFLEDKNVSI) constitute an LCN-type CS-alpha/beta domain. 3 cysteine pairs are disulfide-bonded: Cys-40–Cys-63, Cys-49–Cys-68, and Cys-53–Cys-70.

Expressed by the venom gland.

It localises to the secreted. Functionally, probable neurotoxin that inhibits ion channels. Is toxic to mice. Is about 2.8% of the total protein in the venom. This Androctonus crassicauda (Arabian fat-tailed scorpion) protein is Toxin Acra I-2.